Reading from the N-terminus, the 936-residue chain is Protocadherin gamma-A10 (936 aa).

Positions 1–32 (MAAQRNRSKESKDCSGLVLLCLFFGIPWEAGA) are cleaved as a signal peptide. 6 Cadherin domains span residues 33 to 137 (RQIS…APTF), 138 to 246 (QAEN…APVF), 247 to 351 (TLPE…SPEL), 352 to 456 (TITS…PPTF), 457 to 566 (SQVS…APEI), and 574 to 687 (DGST…SPAN). The Extracellular portion of the chain corresponds to 33 to 696 (RQISYSIPEE…NSETSDLTLY (664 aa)). An N-linked (GlcNAc...) asparagine glycan is attached at Asn-51. Residues Asn-423 and Asn-549 are each glycosylated (N-linked (GlcNAc...) asparagine). Residues 697–717 (LVVAVAAVSCVFLAFVIVLLA) traverse the membrane as a helical segment. Residues 718–936 (LRLRRWHKSR…KKKSGKKEKK (219 aa)) are Cytoplasmic-facing. Disordered stretches follow at residues 801–845 (SKFP…WPNN) and 906–936 (ATLT…KEKK). A compositionally biased stretch (polar residues) spans 820-845 (WRFSQAQRPGTSGSQNGDDTGTWPNN). Residues 926-936 (NKKKSGKKEKK) are compositionally biased toward basic residues.

The protein resides in the cell membrane. Potential calcium-dependent cell-adhesion protein. May be involved in the establishment and maintenance of specific neuronal connections in the brain. The protein is Protocadherin gamma-A10 (PCDHGA10) of Pan troglodytes (Chimpanzee).